Consider the following 110-residue polypeptide: UPF0122 protein BcerKBAB4_3669 (110 aa).

The protein belongs to the UPF0122 family.

Functionally, might take part in the signal recognition particle (SRP) pathway. This is inferred from the conservation of its genetic proximity to ftsY/ffh. May be a regulatory protein. This chain is UPF0122 protein BcerKBAB4_3669, found in Bacillus mycoides (strain KBAB4) (Bacillus weihenstephanensis).